A 355-amino-acid chain; its full sequence is Protein RecA (355 aa).

65–72 (GPESSGKT) contacts ATP.

The protein belongs to the RecA family.

The protein localises to the cytoplasm. Can catalyze the hydrolysis of ATP in the presence of single-stranded DNA, the ATP-dependent uptake of single-stranded DNA by duplex DNA, and the ATP-dependent hybridization of homologous single-stranded DNAs. It interacts with LexA causing its activation and leading to its autocatalytic cleavage. The chain is Protein RecA from Pseudomonas entomophila (strain L48).